We begin with the raw amino-acid sequence, 84 residues long: U8-theraphotoxin-Hhn1f (84 aa).

A signal peptide spans 1–21 (MKVVLLVCLVWMMAMMELVSC). Intrachain disulfides connect C23–C35, C29–C44, C34–C67, C54–C75, and C69–C81.

This sequence belongs to the AVIT (prokineticin) family. Expressed by the venom gland.

The protein resides in the secreted. The protein is U8-theraphotoxin-Hhn1f of Cyriopagopus hainanus (Chinese bird spider).